Consider the following 436-residue polypeptide: Trigger factor (436 aa).

Residues 163 to 248 enclose the PPIase FKBP-type domain; sequence GDRVVLDFAG…VKEVAEGVLP (86 aa).

This sequence belongs to the FKBP-type PPIase family. Tig subfamily.

It is found in the cytoplasm. It catalyses the reaction [protein]-peptidylproline (omega=180) = [protein]-peptidylproline (omega=0). Involved in protein export. Acts as a chaperone by maintaining the newly synthesized protein in an open conformation. Functions as a peptidyl-prolyl cis-trans isomerase. The sequence is that of Trigger factor from Bordetella parapertussis (strain 12822 / ATCC BAA-587 / NCTC 13253).